The chain runs to 727 residues: Catalase-peroxidase (727 aa).

Residues Met-1–Pro-21 form a disordered region. Residues Trp-95 to Tyr-217 constitute a cross-link (tryptophyl-tyrosyl-methioninium (Trp-Tyr) (with M-243)). His-96 serves as the catalytic Proton acceptor. The tryptophyl-tyrosyl-methioninium (Tyr-Met) (with W-95) cross-link spans Tyr-217–Met-243. His-258 is a heme b binding site.

It belongs to the peroxidase family. Peroxidase/catalase subfamily. As to quaternary structure, homodimer or homotetramer. Heme b is required as a cofactor. Post-translationally, formation of the three residue Trp-Tyr-Met cross-link is important for the catalase, but not the peroxidase activity of the enzyme.

It carries out the reaction H2O2 + AH2 = A + 2 H2O. The catalysed reaction is 2 H2O2 = O2 + 2 H2O. Functionally, bifunctional enzyme with both catalase and broad-spectrum peroxidase activity. Important for stationary phase survival. This Caulobacter vibrioides (strain ATCC 19089 / CIP 103742 / CB 15) (Caulobacter crescentus) protein is Catalase-peroxidase.